The chain runs to 334 residues: Hematopoietic SH2 domain-containing protein (334 aa).

The 92-residue stretch at 34–125 folds into the SH2 domain; sequence WFHGTISREA…PFGELLTQAC (92 aa). Disordered stretches follow at residues 157–181 and 254–280; these read EVQR…KGEF and EDSC…ATFR. A compositionally biased stretch (polar residues) spans 258-267; sequence AATTSLQNPA.

In terms of assembly, interacts with FES and TNK2. Post-translationally, may be phosphorylated by FES and ACK1. In terms of tissue distribution, predominantly expressed in spleen and thymus. Appears not to be expressed in heart, brain, liver, kidney, embryo, lung and ovary.

Its subcellular location is the cytoplasm. The protein localises to the mitochondrion. Its function is as follows. Adapter protein involved in tyrosine kinase and CD28 signaling. May be a modulator of the apoptotic response through its ability to affect mitochondrial stability. The sequence is that of Hematopoietic SH2 domain-containing protein (Hsh2d) from Mus musculus (Mouse).